The primary structure comprises 78 residues: U29-theraphotoxin-Cg1a (78 aa).

A signal peptide spans 1–19 (MRYQTVFWILLIALCTVNP). 4 disulfide bridges follow: Cys42/Cys56, Cys49/Cys60, Cys55/Cys77, and Cys67/Cys73.

This sequence belongs to the neurotoxin 13 (insecticidal toxin ABC) family. 03 (JZTX-59) subfamily. Expressed by the venom gland.

It is found in the secreted. Functionally, probable ion channel inhibitor. The chain is U29-theraphotoxin-Cg1a from Chilobrachys guangxiensis (Chinese earth tiger tarantula).